The chain runs to 453 residues: Allantoinase (453 aa).

His59, His61, Lys146, His186, His242, and Asp315 together coordinate Zn(2+). An N6-carboxylysine modification is found at Lys146.

It belongs to the metallo-dependent hydrolases superfamily. Allantoinase family. In terms of assembly, homotetramer. Zn(2+) serves as cofactor. Post-translationally, carboxylation allows a single lysine to coordinate two zinc ions.

It carries out the reaction (S)-allantoin + H2O = allantoate + H(+). It participates in nitrogen metabolism; (S)-allantoin degradation; allantoate from (S)-allantoin: step 1/1. Catalyzes the conversion of allantoin (5-ureidohydantoin) to allantoic acid by hydrolytic cleavage of the five-member hydantoin ring. The chain is Allantoinase from Escherichia coli O9:H4 (strain HS).